Here is a 238-residue protein sequence, read N- to C-terminus: Ribitol-5-phosphate cytidylyltransferase 2 (238 aa).

Residues 7-10 (LAGG) and 81-87 (GTDRNET) each bind CTP.

It belongs to the IspD/TarI cytidylyltransferase family. TarI subfamily. In terms of assembly, heterodimer together with TarJ.

It catalyses the reaction D-ribitol 5-phosphate + CTP + H(+) = CDP-L-ribitol + diphosphate. Its pathway is cell wall biogenesis; poly(ribitol phosphate) teichoic acid biosynthesis. Catalyzes the transfer of the cytidylyl group of CTP to D-ribitol 5-phosphate. The polypeptide is Ribitol-5-phosphate cytidylyltransferase 2 (Staphylococcus aureus (strain NCTC 8325 / PS 47)).